The following is a 427-amino-acid chain: Serine--tRNA ligase (427 aa).

Residue 235 to 237 coordinates L-serine; that stretch reads TAE. ATP is bound by residues 266–268 and V282; that span reads RRE. E289 provides a ligand contact to L-serine. Residue 353-356 participates in ATP binding; that stretch reads EASS. S389 serves as a coordination point for L-serine.

It belongs to the class-II aminoacyl-tRNA synthetase family. Type-1 seryl-tRNA synthetase subfamily. As to quaternary structure, homodimer. The tRNA molecule binds across the dimer.

The protein localises to the cytoplasm. The catalysed reaction is tRNA(Ser) + L-serine + ATP = L-seryl-tRNA(Ser) + AMP + diphosphate + H(+). It catalyses the reaction tRNA(Sec) + L-serine + ATP = L-seryl-tRNA(Sec) + AMP + diphosphate + H(+). The protein operates within aminoacyl-tRNA biosynthesis; selenocysteinyl-tRNA(Sec) biosynthesis; L-seryl-tRNA(Sec) from L-serine and tRNA(Sec): step 1/1. Its function is as follows. Catalyzes the attachment of serine to tRNA(Ser). Is also able to aminoacylate tRNA(Sec) with serine, to form the misacylated tRNA L-seryl-tRNA(Sec), which will be further converted into selenocysteinyl-tRNA(Sec). In Chloroherpeton thalassium (strain ATCC 35110 / GB-78), this protein is Serine--tRNA ligase.